The primary structure comprises 132 residues: Intraflagellar transport protein 20 homolog B (132 aa).

Positions 87–112 (EAQQQQLYALIAEKKMQLERYRIEYD) form a coiled coil.

It localises to the golgi apparatus. The protein resides in the cis-Golgi network. The protein localises to the cytoplasm. Its subcellular location is the cytoskeleton. It is found in the microtubule organizing center. It localises to the centrosome. The protein resides in the centriole. The protein localises to the cell projection. Its subcellular location is the cilium. In terms of biological role, involved in ciliary process assembly. May play a role in the trafficking of ciliary membrane proteins from the Golgi complex to the cilium. Regulates the platelet-derived growth factor receptor-alpha (PDGFRA) signaling pathway. Plays an important role in spermatogenesis, particularly spermiogenesis, when germ cells form flagella. The polypeptide is Intraflagellar transport protein 20 homolog B (ift20-b) (Xenopus laevis (African clawed frog)).